Consider the following 171-residue polypeptide: Ribosome maturation factor RimM (171 aa).

In terms of domain architecture, PRC barrel spans 97-169 (DGEFYYHEII…RVDVDIMEGL (73 aa)).

The protein belongs to the RimM family. Binds ribosomal protein uS19.

Its subcellular location is the cytoplasm. Functionally, an accessory protein needed during the final step in the assembly of 30S ribosomal subunit, possibly for assembly of the head region. Essential for efficient processing of 16S rRNA. May be needed both before and after RbfA during the maturation of 16S rRNA. It has affinity for free ribosomal 30S subunits but not for 70S ribosomes. The chain is Ribosome maturation factor RimM from Lactococcus lactis subsp. cremoris (strain SK11).